Reading from the N-terminus, the 353-residue chain is E3 ubiquitin-protein ligase Os03g0188200 (353 aa).

A helical transmembrane segment spans residues 48–68 (VVVLVALITAFVLLTVFSVLI). The RING-type; atypical zinc finger occupies 133–175 (CAVCLAEFADSDELRVLPACCHVFHPDCIDPWLAAAVTCPLCR). Composition is skewed to basic and acidic residues over residues 308 to 318 (ADWDAGEEHGG) and 340 to 353 (GSKE…LNRV). Positions 308–353 (ADWDAGEEHGGSKRVHPVAGAQDETPSGSGSDGSKENSDSDALNRV) are disordered.

The protein resides in the membrane. The catalysed reaction is S-ubiquitinyl-[E2 ubiquitin-conjugating enzyme]-L-cysteine + [acceptor protein]-L-lysine = [E2 ubiquitin-conjugating enzyme]-L-cysteine + N(6)-ubiquitinyl-[acceptor protein]-L-lysine.. The protein operates within protein modification; protein ubiquitination. Possesses E3 ubiquitin-protein ligase in vitro. The polypeptide is E3 ubiquitin-protein ligase Os03g0188200 (Oryza sativa subsp. japonica (Rice)).